A 229-amino-acid chain; its full sequence is UPF0758 protein Cagg_0777 (229 aa).

The MPN domain maps to P105–G227. The Zn(2+) site is built by H176, H178, and D189. The JAMM motif motif lies at H176 to D189.

It belongs to the UPF0758 family.

The sequence is that of UPF0758 protein Cagg_0777 from Chloroflexus aggregans (strain MD-66 / DSM 9485).